The following is a 395-amino-acid chain: Carbohydrate sulfotransferase 6 (395 aa).

Topologically, residues 1 to 5 (MWLPR) are cytoplasmic. The chain crosses the membrane as a helical; Signal-anchor for type II membrane protein span at residues 6 to 26 (VSSTAVTALLLAQTFLLLFLV). Residues 27-395 (SRPGPSSPAG…ASSTASHPRN (369 aa)) are Lumenal-facing. Position 49–55 (49–55 (WRSGSSF)) interacts with 3'-phosphoadenylyl sulfate. N116 carries an N-linked (GlcNAc...) asparagine glycan. 3'-phosphoadenylyl sulfate is bound at residue 202-210 (RDPRAVLRS). N-linked (GlcNAc...) asparagine glycosylation is found at N229, N305, and N328.

It belongs to the sulfotransferase 1 family. Gal/GlcNAc/GalNAc subfamily. Expressed in cornea. Mainly expressed in brain. Also expressed in spinal cord and trachea.

The protein localises to the golgi apparatus membrane. It carries out the reaction 3'-phosphoadenylyl sulfate + keratan = adenosine 3',5'-bisphosphate + keratan 6'-sulfate.. Sulfotransferase that utilizes 3'-phospho-5'-adenylyl sulfate (PAPS) as sulfonate donor to catalyze the transfer of sulfate to position 6 of non-reducing N-acetylglucosamine (GlcNAc) residues of keratan. Cooperates with B4GALT4 galactosyltransferase and B3GNT7 N-acetylglucosaminyltransferase to construct and elongate the sulfated disaccharide unit [-&gt;3Galbeta1-&gt;4(6-sulfoGlcNAcbeta)1-&gt;] within keratan sulfate polymer. Involved in biosynthesis of keratan sulfate in cornea, with an impact on proteoglycan fibril organization and corneal transparency. Involved in sulfation of endothelial mucins such as GLYCAM1. The polypeptide is Carbohydrate sulfotransferase 6 (Homo sapiens (Human)).